A 267-amino-acid chain; its full sequence is Hydroxyethylthiazole kinase 2 (267 aa).

Methionine 41 lines the substrate pocket. ATP is bound by residues lysine 116 and threonine 166. Glycine 193 is a binding site for substrate.

It belongs to the Thz kinase family. Mg(2+) is required as a cofactor.

The catalysed reaction is 5-(2-hydroxyethyl)-4-methylthiazole + ATP = 4-methyl-5-(2-phosphooxyethyl)-thiazole + ADP + H(+). It functions in the pathway cofactor biosynthesis; thiamine diphosphate biosynthesis; 4-methyl-5-(2-phosphoethyl)-thiazole from 5-(2-hydroxyethyl)-4-methylthiazole: step 1/1. Its function is as follows. Catalyzes the phosphorylation of the hydroxyl group of 4-methyl-5-beta-hydroxyethylthiazole (THZ). In Streptococcus pneumoniae (strain Hungary19A-6), this protein is Hydroxyethylthiazole kinase 2.